The sequence spans 1057 residues: Carbamoyl phosphate synthase large chain (1057 aa).

The interval 1-401 (MPKNKDINTI…SLLKAIRSLE (401 aa)) is carboxyphosphate synthetic domain. Residues Arg-129, Arg-169, Gly-175, Gly-176, Lys-208, Ile-210, Glu-215, Gly-241, Ile-242, His-243, Gln-284, and Glu-298 each coordinate ATP. The ATP-grasp 1 domain maps to 133 to 327 (RSLMNELDVP…IAKLAAKIAV (195 aa)). 3 residues coordinate Mg(2+): Gln-284, Glu-298, and Asn-300. 3 residues coordinate Mn(2+): Gln-284, Glu-298, and Asn-300. The segment at 402–546 (YGVHHLGLPN…YGTYERDNES (145 aa)) is oligomerization domain. The segment at 547 to 929 (VVTDKEKVIV…ALFKGLTASG (383 aa)) is carbamoyl phosphate synthetic domain. Positions 671–861 (EALLNKIDVP…MAQLAMRAIL (191 aa)) constitute an ATP-grasp 2 domain. Residues Arg-707, Arg-746, Leu-748, Glu-752, Gly-777, Val-778, His-779, Ser-780, Gln-820, and Glu-832 each contribute to the ATP site. Positions 820, 832, and 834 each coordinate Mg(2+). Mn(2+) is bound by residues Gln-820, Glu-832, and Asn-834. Residues 930-1057 (VEVKDHGTVL…ESMSFTMKQM (128 aa)) enclose the MGS-like domain. An allosteric domain region spans residues 930–1057 (VEVKDHGTVL…ESMSFTMKQM (128 aa)).

This sequence belongs to the CarB family. In terms of assembly, composed of two chains; the small (or glutamine) chain promotes the hydrolysis of glutamine to ammonia, which is used by the large (or ammonia) chain to synthesize carbamoyl phosphate. Tetramer of heterodimers (alpha,beta)4. Mg(2+) is required as a cofactor. Mn(2+) serves as cofactor.

It catalyses the reaction hydrogencarbonate + L-glutamine + 2 ATP + H2O = carbamoyl phosphate + L-glutamate + 2 ADP + phosphate + 2 H(+). The catalysed reaction is hydrogencarbonate + NH4(+) + 2 ATP = carbamoyl phosphate + 2 ADP + phosphate + 2 H(+). Its pathway is amino-acid biosynthesis; L-arginine biosynthesis; carbamoyl phosphate from bicarbonate: step 1/1. The protein operates within pyrimidine metabolism; UMP biosynthesis via de novo pathway; (S)-dihydroorotate from bicarbonate: step 1/3. Functionally, large subunit of the glutamine-dependent carbamoyl phosphate synthetase (CPSase). CPSase catalyzes the formation of carbamoyl phosphate from the ammonia moiety of glutamine, carbonate, and phosphate donated by ATP, constituting the first step of 2 biosynthetic pathways, one leading to arginine and/or urea and the other to pyrimidine nucleotides. The large subunit (synthetase) binds the substrates ammonia (free or transferred from glutamine from the small subunit), hydrogencarbonate and ATP and carries out an ATP-coupled ligase reaction, activating hydrogencarbonate by forming carboxy phosphate which reacts with ammonia to form carbamoyl phosphate. The protein is Carbamoyl phosphate synthase large chain of Staphylococcus carnosus (strain TM300).